The sequence spans 383 residues: Presenilin-associated rhomboid-like protein A, mitochondrial (383 aa).

A mitochondrion-targeting transit peptide spans 1–37; that stretch reads MAWRSCFMKWTQINSINASSLCPKSTRLNIHPQQRCG. The disordered stretch occupies residues 35-75; sequence RCGFRKTERPSESKKGVQETEAEAGGHNRAVPPKPVPPLPP. Over 38–83 the chain is Mitochondrial matrix; that stretch reads FRKTERPSESKKGVQETEAEAGGHNRAVPPKPVPPLPPRRPHQLFR. The segment covering 39–52 has biased composition (basic and acidic residues); the sequence is RKTERPSESKKGVQ. The span at 66–75 shows a compositional bias: pro residues; that stretch reads PPKPVPPLPP. The helical transmembrane segment at 84–104 threads the bilayer; it reads PLVFTVGFTGCSFGAAAILQY. Over 105 to 168 the chain is Mitochondrial intermembrane; it reads ESVKSRVQLA…FWSGLSEGQK (64 aa). The helical transmembrane segment at 169 to 189 threads the bilayer; the sequence is TVTGIIALNTVVLCCWRVPAM. Residues 190-219 lie on the Mitochondrial matrix side of the membrane; sequence QRFLVKYFTSNPASKTRCLPMVLSSFSHYS. A helical membrane pass occupies residues 220–240; the sequence is VIHMVVNMYVLWTFSSSIVSL. Residues 241-245 lie on the Mitochondrial intermembrane side of the membrane; that stretch reads LGREQ. The helical transmembrane segment at 246-266 threads the bilayer; sequence FLALYLSGGVISTFVSYVFKT. The Mitochondrial matrix segment spans residues 267–271; that stretch reads ATGRL. The chain crosses the membrane as a helical span at residues 272-292; it reads GPSLGASGSIMTVLAAVCTKI. The active-site Nucleophile is serine 278. The Mitochondrial intermembrane portion of the chain corresponds to 293 to 298; the sequence is PEAKLG. The chain crosses the membrane as a helical span at residues 299-319; sequence IVLLPVISFSAGNALKALVAL. Topologically, residues 320–334 are mitochondrial matrix; that stretch reads DIAGLVLGWRFFDHA. Residues 335-355 form a helical membrane-spanning segment; that stretch reads AHLGGALFGVWYIGYGHELIW. Residue histidine 336 is part of the active site. Residues 356–383 lie on the Mitochondrial intermembrane side of the membrane; the sequence is RKREPLIKFWHELRNMSPGRPGPGGGGG.

Belongs to the peptidase S54 family.

It localises to the mitochondrion inner membrane. It carries out the reaction Cleaves type-1 transmembrane domains using a catalytic dyad composed of serine and histidine that are contributed by different transmembrane domains.. Required for the control of apoptosis during postnatal growth. Essential for proteolytic processing of an antiapoptotic form of opa1 which prevents the release of mitochondrial cytochrome c in response to intrinsic apoptotic signals. This is Presenilin-associated rhomboid-like protein A, mitochondrial (parla) from Danio rerio (Zebrafish).